A 214-amino-acid chain; its full sequence is Small ribosomal subunit protein uS2 (214 aa).

It belongs to the universal ribosomal protein uS2 family.

The sequence is that of Small ribosomal subunit protein uS2 from Methanococcoides burtonii (strain DSM 6242 / NBRC 107633 / OCM 468 / ACE-M).